The following is a 183-amino-acid chain: Probable calcium-binding protein CML47 (183 aa).

EF-hand domains lie at 112–147 (MGKE…LGYD) and 149–183 (CTKM…KSFS). 9 residues coordinate Ca(2+): Asp-125, Asn-127, Asp-129, Glu-136, Asp-162, Asn-164, Asp-166, Lys-168, and Glu-173.

Functionally, potential calcium sensor. The sequence is that of Probable calcium-binding protein CML47 (CML47) from Arabidopsis thaliana (Mouse-ear cress).